The primary structure comprises 63 residues: Large ribosomal subunit protein uL29 (63 aa).

Belongs to the universal ribosomal protein uL29 family.

This Pseudoalteromonas atlantica (strain T6c / ATCC BAA-1087) protein is Large ribosomal subunit protein uL29.